Consider the following 59-residue polypeptide: Large ribosomal subunit protein uL30 (59 aa).

This sequence belongs to the universal ribosomal protein uL30 family. Part of the 50S ribosomal subunit.

In Stutzerimonas stutzeri (strain A1501) (Pseudomonas stutzeri), this protein is Large ribosomal subunit protein uL30.